Reading from the N-terminus, the 1240-residue chain is DNA polymerase II large subunit (1240 aa).

Belongs to the archaeal DNA polymerase II family. As to quaternary structure, heterodimer of a large subunit and a small subunit.

It catalyses the reaction DNA(n) + a 2'-deoxyribonucleoside 5'-triphosphate = DNA(n+1) + diphosphate. The catalysed reaction is Exonucleolytic cleavage in the 3'- to 5'-direction to yield nucleoside 5'-phosphates.. In terms of biological role, possesses two activities: a DNA synthesis (polymerase) and an exonucleolytic activity that degrades single-stranded DNA in the 3'- to 5'-direction. Has a template-primer preference which is characteristic of a replicative DNA polymerase. This Methanopyrus kandleri (strain AV19 / DSM 6324 / JCM 9639 / NBRC 100938) protein is DNA polymerase II large subunit.